A 159-amino-acid chain; its full sequence is Urease subunit beta 2 (159 aa).

The disordered stretch occupies residues 1 to 24 (MAKEPTKAAHPQPEQTKTNHKAHR).

The protein belongs to the urease beta subunit family. Heterotrimer of UreA (gamma), UreB (beta) and UreC (alpha) subunits. Three heterotrimers associate to form the active enzyme.

It is found in the cytoplasm. The enzyme catalyses urea + 2 H2O + H(+) = hydrogencarbonate + 2 NH4(+). It participates in nitrogen metabolism; urea degradation; CO(2) and NH(3) from urea (urease route): step 1/1. Disrupting the ure2 operon has no effect on urease activity, or pathogen survival in BALB/c mice when inoculated by gavage, but confers slightly enhanced resistance to low pH killing in vitro. The protein is Urease subunit beta 2 of Brucella suis biovar 1 (strain 1330).